Consider the following 347-residue polypeptide: Glycerol-1-phosphate dehydrogenase [NAD(P)+] (347 aa).

Residues 90 to 94 and 112 to 115 contribute to the NAD(+) site; these read GRPVD and TAIS. Asp117 is a binding site for substrate. Residue Ser121 participates in NAD(+) binding. Residue Asp165 coordinates substrate. Zn(2+) is bound by residues Asp165 and His245. His249 is a substrate binding site. Residue His262 coordinates Zn(2+).

Belongs to the glycerol-1-phosphate dehydrogenase family. Homodimer. Zn(2+) serves as cofactor.

Its subcellular location is the cytoplasm. It carries out the reaction sn-glycerol 1-phosphate + NAD(+) = dihydroxyacetone phosphate + NADH + H(+). The enzyme catalyses sn-glycerol 1-phosphate + NADP(+) = dihydroxyacetone phosphate + NADPH + H(+). It functions in the pathway membrane lipid metabolism; glycerophospholipid metabolism. Its function is as follows. Catalyzes the NAD(P)H-dependent reduction of dihydroxyacetonephosphate (DHAP or glycerone phosphate) to glycerol 1-phosphate (G1P). The G1P thus generated is used as the glycerophosphate backbone of phospholipids in the cellular membranes of Archaea. This chain is Glycerol-1-phosphate dehydrogenase [NAD(P)+], found in Thermofilum pendens (strain DSM 2475 / Hrk 5).